The sequence spans 523 residues: Lysine--tRNA ligase (523 aa).

The short motif at 30 to 38 is the 'HIGH' region element; that stretch reads PSGYVHVGN. Residues Asp-95, Cys-99, His-100, His-106, Cys-177, His-180, Cys-199, and His-203 each coordinate Zn(2+). A 'KMSKS' region motif is present at residues 279 to 283; that stretch reads KMSGS.

The protein belongs to the class-I aminoacyl-tRNA synthetase family. Zn(2+) serves as cofactor.

It is found in the cytoplasm. The catalysed reaction is tRNA(Lys) + L-lysine + ATP = L-lysyl-tRNA(Lys) + AMP + diphosphate. The protein is Lysine--tRNA ligase (lysS) of Pyrococcus horikoshii (strain ATCC 700860 / DSM 12428 / JCM 9974 / NBRC 100139 / OT-3).